Here is a 375-residue protein sequence, read N- to C-terminus: uncharacterized protein (375 aa).

Residue Lys-99 forms an Isoglutamyl lysine isopeptide (Lys-Gln) (interchain with Q-Cter in protein Pup) linkage.

It belongs to the IMPDH/GMPR family.

This is an uncharacterized protein from Mycolicibacterium smegmatis (strain ATCC 700084 / mc(2)155) (Mycobacterium smegmatis).